The chain runs to 523 residues: Frizzled-2 (523 aa).

An FZ domain is found at 1–120 (PDHGFCQPIS…HGAEQICVGQ (120 aa)). At 1 to 205 (PDHGFCQPIS…EDEIRFARVW (205 aa)) the chain is on the extracellular side. Intrachain disulfides connect C6/C67, C14/C60, C51/C88, C77/C117, and C81/C105. The N-linked (GlcNAc...) asparagine glycan is linked to N20. N-linked (GlcNAc...) asparagine glycosylation is present at N121. A helical membrane pass occupies residues 206–226 (ILVWSVLCCASTFFTVTTYLV). The Cytoplasmic segment spans residues 227 to 237 (DMQRFRYPERP). The chain crosses the membrane as a helical span at residues 238-258 (IIFLSGCYTMVSVAYIAGFVL). Residues 259 to 285 (EERVVCNERFQEDGYRTVVQGTKKEGC) are Extracellular-facing. The chain crosses the membrane as a helical span at residues 286 to 306 (TILFMMLYFFSMASSIWWVIL). At 307-328 (SLTWFLAAGMKWGHEAIEANSQ) the chain is on the cytoplasmic side. The chain crosses the membrane as a helical span at residues 329–349 (YFHLAAWAVPAVKTITILAMG). At 350–372 (QIDGDLLSGVCFVGLNGIDPLRG) the chain is on the extracellular side. The helical transmembrane segment at 373 to 393 (FVLAPLFVYLFIGTSFLLAGF) threads the bilayer. Residues 394–419 (VSLFRIRTIMKHGGTKTEKLERLMVR) are Cytoplasmic-facing. A helical transmembrane segment spans residues 420-440 (IGVFSVLYTVPATIVIACYFY). Topologically, residues 441–477 (EQAFRQHWERSWISQHCKSLAIPCPLHFTPRMTPDFT) are extracellular. A helical transmembrane segment spans residues 478-498 (VYMIKYLMTLIVGITSGFWIF). Topologically, residues 499-523 (SGKTLHSWRKFYTRLTNSRQGETTV) are cytoplasmic. Residues 501 to 506 (KTLHSW) carry the Lys-Thr-X-X-X-Trp motif, mediates interaction with the PDZ domain of Dvl family members motif. Positions 521-523 (TTV) match the PDZ-binding motif.

The protein belongs to the G-protein coupled receptor Fz/Smo family. Expressed in the developing head and limbs. Expressed broadly in cranial ectoderm. Also expressed in the developing somites (dermomyotome) and in other cranial placodes, including the olfactory, lens, and otic placodes (rostral rim of the vesicle).

It is found in the membrane. The protein localises to the cell membrane. Receptor for Wnt proteins. Most of frizzled receptors are coupled to the beta-catenin canonical signaling pathway, which leads to the activation of disheveled proteins, inhibition of GSK-3 kinase, nuclear accumulation of beta-catenin and activation of Wnt target genes. A second signaling pathway involving PKC and calcium fluxes has been seen for some family members, but it is not yet clear if it represents a distinct pathway or if it can be integrated in the canonical pathway, as PKC seems to be required for Wnt-mediated inactivation of GSK-3 kinase. Both pathways seem to involve interactions with G-proteins. May be involved in transduction and intercellular transmission of polarity information during tissue morphogenesis and/or in differentiated tissues. This chain is Frizzled-2 (FZD2), found in Gallus gallus (Chicken).